We begin with the raw amino-acid sequence, 495 residues long: ATP synthase subunit beta, chloroplastic (495 aa).

Position 172 to 179 (Gly-172 to Thr-179) interacts with ATP.

Belongs to the ATPase alpha/beta chains family. As to quaternary structure, F-type ATPases have 2 components, CF(1) - the catalytic core - and CF(0) - the membrane proton channel. CF(1) has five subunits: alpha(3), beta(3), gamma(1), delta(1), epsilon(1). CF(0) has four main subunits: a(1), b(1), b'(1) and c(9-12).

It is found in the plastid. The protein localises to the chloroplast thylakoid membrane. It catalyses the reaction ATP + H2O + 4 H(+)(in) = ADP + phosphate + 5 H(+)(out). Functionally, produces ATP from ADP in the presence of a proton gradient across the membrane. The catalytic sites are hosted primarily by the beta subunits. The polypeptide is ATP synthase subunit beta, chloroplastic (Barnardia japonica (Chinese squill)).